Reading from the N-terminus, the 626-residue chain is Transketolase-like protein 2 (626 aa).

Thiamine diphosphate contacts are provided by residues S41, H78, and 124 to 126; that span reads GSL. D156 is a Mg(2+) binding site. Thiamine diphosphate is bound by residues G157 and N186. N186 and L188 together coordinate Mg(2+). Thiamine diphosphate contacts are provided by K248 and H262. Substrate is bound by residues H262 and S349. Thiamine diphosphate contacts are provided by E370 and F396. The active-site Proton donor is E370. Substrate is bound by residues H420 and D428. Q432 contributes to the thiamine diphosphate binding site.

Belongs to the transketolase family. In terms of assembly, homodimer. Mg(2+) serves as cofactor. Requires Ca(2+) as cofactor. It depends on Mn(2+) as a cofactor. Co(2+) is required as a cofactor. The cofactor is thiamine diphosphate. In terms of tissue distribution, overexpressed in hepatoma cancer cells.

It catalyses the reaction D-sedoheptulose 7-phosphate + D-glyceraldehyde 3-phosphate = aldehydo-D-ribose 5-phosphate + D-xylulose 5-phosphate. In terms of biological role, plays an essential role in total transketolase activity and cell proliferation in cancer cells; after transfection with anti-TKTL1 siRNA, total transketolase activity dramatically decreases and proliferation was significantly inhibited in cancer cells. Plays a pivotal role in carcinogenesis. In Homo sapiens (Human), this protein is Transketolase-like protein 2 (TKTL2).